The chain runs to 710 residues: Homeobox-leucine zipper protein ROC8 (710 aa).

Positions 1–23 (MDFGDEPEGSDSQRRRKRYHRHT) are disordered. Residues 14-23 (RRRKRYHRHT) show a composition bias toward basic residues. The homeobox DNA-binding region spans 15–74 (RRKRYHRHTPRQIQQLEAMFKECPHPDENQRAQLSRELGLEPRQIKFWFQNRRTQMKAQH). Residues 82 to 144 (LRAENDKIRC…DRVSNLTSKY (63 aa)) are a coiled coil. Residues 197–440 (SDMERPMMAE…LQRACERYAS (244 aa)) form the START domain. Low complexity predominate over residues 630-648 (RPGSAAGASTSSAGPLAAA). The tract at residues 630-650 (RPGSAAGASTSSAGPLAAARG) is disordered.

It belongs to the HD-ZIP homeobox family. Class IV subfamily.

The protein localises to the nucleus. In terms of biological role, probable transcription factor. In Oryza sativa subsp. japonica (Rice), this protein is Homeobox-leucine zipper protein ROC8 (ROC8).